The sequence spans 247 residues: Sugar fermentation stimulation protein homolog (247 aa).

Belongs to the SfsA family.

This Methylorubrum populi (strain ATCC BAA-705 / NCIMB 13946 / BJ001) (Methylobacterium populi) protein is Sugar fermentation stimulation protein homolog.